The following is a 417-amino-acid chain: MKNYQAEIVAVGTELLLGQIANTNAQWLSEKLATYGINMYNHTVVGDNLERVEQAFQLAQSRSNIIIVTGGLGPTADDLTREGFQQMTGLPLVEDKESMEKIEGFFQNRGRTMTPNNRKQARVFEGSTVLNNKAGMAPGMYVHYQSCHWFFLPGVPREMKHISQEELFPFLEKVTGKQRIIQSVVLKFIGIGESTLEHTLSDLIEKQTNPTIAPLAQDQAVVIRLTARGETKQEAEAMLEQTKKLILARVGEHYFGENEESIEDIVVQQLQDLGYSISAAESITGGMFSQRLVSVTGASNVFAGSFITYQSRIKEEVLEVPSEIIHSQGVVSRACSDAMASNVTRKIQTNLGISFTGIAGPDEQEGKPVGTVYISIADGDEVVVSKQFNFTGNRNHIRDRACLKGFELIYQYLKSKS.

It belongs to the CinA family.

In Oceanobacillus iheyensis (strain DSM 14371 / CIP 107618 / JCM 11309 / KCTC 3954 / HTE831), this protein is Putative competence-damage inducible protein.